The sequence spans 103 residues: Small ribosomal subunit protein uS10 (103 aa).

Belongs to the universal ribosomal protein uS10 family. In terms of assembly, part of the 30S ribosomal subunit.

Its function is as follows. Involved in the binding of tRNA to the ribosomes. This is Small ribosomal subunit protein uS10 from Aromatoleum aromaticum (strain DSM 19018 / LMG 30748 / EbN1) (Azoarcus sp. (strain EbN1)).